The following is a 199-amino-acid chain: dITP/XTP pyrophosphatase (199 aa).

7–12 contacts substrate; that stretch reads TGNAGK. Aspartate 68 acts as the Proton acceptor in catalysis. Aspartate 68 provides a ligand contact to Mg(2+). Residues serine 69, 153–156, lysine 176, and 181–182 contribute to the substrate site; these read FGYD and HR.

Belongs to the HAM1 NTPase family. In terms of assembly, homodimer. Requires Mg(2+) as cofactor.

It catalyses the reaction XTP + H2O = XMP + diphosphate + H(+). It carries out the reaction dITP + H2O = dIMP + diphosphate + H(+). The catalysed reaction is ITP + H2O = IMP + diphosphate + H(+). Functionally, pyrophosphatase that catalyzes the hydrolysis of nucleoside triphosphates to their monophosphate derivatives, with a high preference for the non-canonical purine nucleotides XTP (xanthosine triphosphate), dITP (deoxyinosine triphosphate) and ITP. Seems to function as a house-cleaning enzyme that removes non-canonical purine nucleotides from the nucleotide pool, thus preventing their incorporation into DNA/RNA and avoiding chromosomal lesions. This chain is dITP/XTP pyrophosphatase, found in Halorhodospira halophila (strain DSM 244 / SL1) (Ectothiorhodospira halophila (strain DSM 244 / SL1)).